A 636-amino-acid polypeptide reads, in one-letter code: Multicopper oxidase CTB12 (636 aa).

The signal sequence occupies residues 1-23 (MWSVRLYPLALTLLFQCVSPAAA). The region spanning 62–168 (AGIGFREAIF…LYGAVVIAPD (107 aa)) is the Plastocyanin-like 1 domain. Positions 104 and 106 each coordinate Cu cation. Asn136 is a glycosylation site (N-linked (GlcNAc...) asparagine). Cu cation is bound by residues His148 and His150. The N-linked (GlcNAc...) asparagine glycan is linked to Asn304. The Plastocyanin-like 2 domain maps to 318–381 (LTFVNPGGLY…QEKARHVVRV (64 aa)). Asn472 carries an N-linked (GlcNAc...) asparagine glycan. In terms of domain architecture, Plastocyanin-like 3 spans 486–613 (NVEDVPATEL…GGMGMVVLDG (128 aa)). Cu cation contacts are provided by His519, His522, and His524. An N-linked (GlcNAc...) asparagine glycan is attached at Asn576. 4 residues coordinate Cu cation: His595, Cys596, His597, and His601.

Belongs to the multicopper oxidase family.

Its pathway is mycotoxin biosynthesis. In terms of biological role, multicopper oxidase; part of the gene cluster that mediates the biosynthesis of cercosporin, a light-activated, non-host-selective toxin. The perylenequinone chromophore of cercosporin absorbs light energy to attain an electronically-activated triplet state and produces active oxygen species such as the hydroxyl radical, superoxide, hydrogen peroxide or singlet oxygen upon reaction with oxygen molecules. These reactive oxygen species cause damage to various cellular components including lipids, proteins and nucleic acids. The first step of cercosporin biosynthesis is performed by the polyketide synthase CTB1 which catalyzes the formation of nor-toralactone. The starter unit acyltransferase (SAT) domain of CTB1 initiates polyketide extension by the selective utilization of acetyl-CoA, which is elongated to the heptaketide in the beta-ketoacyl synthase (KS) domain by successive condensations with six malonyl units introduced by the malonyl acyltransferase (MAT) domain. The product template (PT) domain catalyzes C4-C9 and C2-C11 aldol cyclizations and dehydrations to a trihydroxynaphthalene, which is thought to be delivered to the thioesterase (TE) domain for product release. The bifunctional enzyme CTB3 then methylates nor-toralactone to toralactone before conducting an unusual oxidative aromatic ring opening. The O-methyltransferase CTB2 further methylates the nascent OH-6 of the CBT3 product, blocking further oxidation at this site before the reductase CTB6 reduces the 2-oxopropyl ketone at position C7, giving naphthalene. The FAD-dependent monooxygenase CTB5 in concert with the multicopper oxidase CTB12 are responsible for homodimerization of naphthalene with CTB7 installing the dioxepine moiety, finally producing cercosporin. The fasciclin domain-containing protein CTB11 might act with CTB5 and CTB12 whereas the roles of CTB9 and CTB10 have still to be elucidated. The protein is Multicopper oxidase CTB12 of Cercospora beticola (Sugarbeet leaf spot fungus).